The chain runs to 210 residues: UMP-CMP kinase 3 (210 aa).

34–39 (GSGKGT) is an ATP binding site. The tract at residues 54–83 (SAGDLLRAEIKSGSENGTMIENMIKEGKIV) is NMP. A ribonucleoside 5'-phosphate is bound by residues R60, 81–83 (KIV), and 108–111 (GFPR). N115 lines the CMP pocket. The LID stretch occupies residues 146-154 (GRNQGRVDD). ATP is bound at residue R147. A ribonucleoside 5'-phosphate is bound by residues R151 and R162. An ATP-binding site is contributed by K190.

The protein belongs to the adenylate kinase family. UMP-CMP kinase subfamily. In terms of assembly, monomer. Mg(2+) serves as cofactor.

Its subcellular location is the cytoplasm. It localises to the nucleus. It carries out the reaction UMP + ATP = UDP + ADP. It catalyses the reaction CMP + ATP = CDP + ADP. The enzyme catalyses dCMP + ATP = dCDP + ADP. Functionally, catalyzes the phosphorylation of pyrimidine nucleoside monophosphates at the expense of ATP. Plays an important role in de novo pyrimidine nucleotide biosynthesis. Has preference for UMP and CMP as phosphate acceptors. In Oryza sativa subsp. japonica (Rice), this protein is UMP-CMP kinase 3 (URA6).